Consider the following 227-residue polypeptide: Cytochrome c oxidase subunit 2 (227 aa).

Over 1 to 14 the chain is Mitochondrial intermembrane; sequence MAHPMQLGFQDAAS. Residues 15 to 45 traverse the membrane as a helical segment; that stretch reads PIMEELLYFHDHTLMIVFMISSLVLYIISLM. Topologically, residues 46–59 are mitochondrial matrix; that stretch reads LSTELTHTSTMDAQ. The chain crosses the membrane as a helical span at residues 60 to 87; sequence EVETVWTILPAVILILIALPSLRILYMM. The Mitochondrial intermembrane segment spans residues 88-227; it reads DEINTPSMTL…YFEEWLLKSL (140 aa). Residues histidine 161, cysteine 196, glutamate 198, cysteine 200, histidine 204, and methionine 207 each contribute to the Cu cation site. Glutamate 198 lines the Mg(2+) pocket. Tyrosine 218 carries the post-translational modification Phosphotyrosine.

Belongs to the cytochrome c oxidase subunit 2 family. Component of the cytochrome c oxidase (complex IV, CIV), a multisubunit enzyme composed of 14 subunits. The complex is composed of a catalytic core of 3 subunits MT-CO1, MT-CO2 and MT-CO3, encoded in the mitochondrial DNA, and 11 supernumerary subunits COX4I, COX5A, COX5B, COX6A, COX6B, COX6C, COX7A, COX7B, COX7C, COX8 and NDUFA4, which are encoded in the nuclear genome. The complex exists as a monomer or a dimer and forms supercomplexes (SCs) in the inner mitochondrial membrane with NADH-ubiquinone oxidoreductase (complex I, CI) and ubiquinol-cytochrome c oxidoreductase (cytochrome b-c1 complex, complex III, CIII), resulting in different assemblies (supercomplex SCI(1)III(2)IV(1) and megacomplex MCI(2)III(2)IV(2)). Found in a complex with TMEM177, COA6, COX18, COX20, SCO1 and SCO2. Interacts with TMEM177 in a COX20-dependent manner. Interacts with COX20. Interacts with COX16. It depends on Cu cation as a cofactor.

The protein resides in the mitochondrion inner membrane. The catalysed reaction is 4 Fe(II)-[cytochrome c] + O2 + 8 H(+)(in) = 4 Fe(III)-[cytochrome c] + 2 H2O + 4 H(+)(out). In terms of biological role, component of the cytochrome c oxidase, the last enzyme in the mitochondrial electron transport chain which drives oxidative phosphorylation. The respiratory chain contains 3 multisubunit complexes succinate dehydrogenase (complex II, CII), ubiquinol-cytochrome c oxidoreductase (cytochrome b-c1 complex, complex III, CIII) and cytochrome c oxidase (complex IV, CIV), that cooperate to transfer electrons derived from NADH and succinate to molecular oxygen, creating an electrochemical gradient over the inner membrane that drives transmembrane transport and the ATP synthase. Cytochrome c oxidase is the component of the respiratory chain that catalyzes the reduction of oxygen to water. Electrons originating from reduced cytochrome c in the intermembrane space (IMS) are transferred via the dinuclear copper A center (CU(A)) of subunit 2 and heme A of subunit 1 to the active site in subunit 1, a binuclear center (BNC) formed by heme A3 and copper B (CU(B)). The BNC reduces molecular oxygen to 2 water molecules using 4 electrons from cytochrome c in the IMS and 4 protons from the mitochondrial matrix. The sequence is that of Cytochrome c oxidase subunit 2 (MT-CO2) from Nycticebus coucang (Slow loris).